The following is a 261-amino-acid chain: MDPIPHSITRTLSRFRTELTSESGSLAIHELEVAEYKASASLRYLACLVGLPWVIPISLRKGLEPWVTNWWNTGKSHQIFDYLQEENALGRFEKIEELFLLERMVEDSSGTHSQDLRIEIHKETIQLVEMYNEDCIQIISHLLTNLIGFAFISAYLILGKNQLAIINSWIQEFFYSLSDTMKAFLILLATDLCIGFHSPHGWELMIDSISENYGFAHNERIISGLVSTFPVILDTILKYWIFRRFNRISPSLVVIYHSMNE.

3 consecutive transmembrane segments (helical) span residues 138–158, 184–204, and 221–241; these read IISH…YLIL, FLIL…GWEL, and IISG…KYWI.

This sequence belongs to the CemA family.

The protein localises to the plastid. Its subcellular location is the chloroplast inner membrane. It catalyses the reaction K(+)(in) + H(+)(out) = K(+)(out) + H(+)(in). Contributes to K(+)/H(+) antiport activity by supporting proton efflux to control proton extrusion and homeostasis in chloroplasts in a light-dependent manner to modulate photosynthesis. Prevents excessive induction of non-photochemical quenching (NPQ) under continuous-light conditions. Indirectly promotes efficient inorganic carbon uptake into chloroplasts. The chain is Potassium/proton antiporter CemA from Pinus koraiensis (Korean pine).